We begin with the raw amino-acid sequence, 431 residues long: uncharacterized protein (431 aa).

3 disordered regions span residues 31 to 55 (VPAS…QAGV), 257 to 291 (QNGG…PKQD), and 365 to 431 (FQSP…HRKA). Polar residues predominate over residues 42-55 (VSASQPNGAHQAGV). Positions 412–425 (VEYRRGRSLRESRE) are enriched in basic and acidic residues.

This is an uncharacterized protein from Arabidopsis thaliana (Mouse-ear cress).